The primary structure comprises 455 residues: MSFIPHKPEQIEKMLGTIGASSIDQLFDEIPAHLRADTLKIKDGINEIQLANQMRKRANRNHHNTNFIGAGAYSHHIPAAIWDIVARGEFYTAYTPYQAEASQGGLQVIYEFQTMMAGLTGMDASNASMYDGATALAESVLMAIRSNKKAKSQKILIAEALHPTYLRVLETITKHQGIEFDIVNLDSKNGKTDITKLEDFANTDYAAVVIQSPNFLGQLADVDGITNWAHKHGALVIAVTNPMSLAILKSPAEWGENGADIVCGEGQPMGVPLASGGPYFGFMTCKMAHVRQMPGRIVGRTVDLDGNEGFCLTLQAREQHIRRAKATSNICTNQGLMVTAATIYMSLLGAKGLERVASISHENTTKLANELSKLDGVNARFNNVSFNEVVIDLPVNAEIFVTEMEKEGIDAGYFLGEYHSDLDNSIMVCATEIHTSEDIKEYIEATKKVLARIGG.

This sequence belongs to the GcvP family. N-terminal subunit subfamily. As to quaternary structure, the glycine cleavage system is composed of four proteins: P, T, L and H. In this organism, the P 'protein' is a heterodimer of two subunits.

The enzyme catalyses N(6)-[(R)-lipoyl]-L-lysyl-[glycine-cleavage complex H protein] + glycine + H(+) = N(6)-[(R)-S(8)-aminomethyldihydrolipoyl]-L-lysyl-[glycine-cleavage complex H protein] + CO2. Functionally, the glycine cleavage system catalyzes the degradation of glycine. The P protein binds the alpha-amino group of glycine through its pyridoxal phosphate cofactor; CO(2) is released and the remaining methylamine moiety is then transferred to the lipoamide cofactor of the H protein. The protein is Probable glycine dehydrogenase (decarboxylating) subunit 1 of Francisella philomiragia subsp. philomiragia (strain ATCC 25017 / CCUG 19701 / FSC 153 / O#319-036).